The sequence spans 273 residues: 2,3,4,5-tetrahydropyridine-2,6-dicarboxylate N-succinyltransferase (273 aa).

Positions 105 and 142 each coordinate substrate.

The protein belongs to the transferase hexapeptide repeat family. As to quaternary structure, homotrimer.

It localises to the cytoplasm. It carries out the reaction (S)-2,3,4,5-tetrahydrodipicolinate + succinyl-CoA + H2O = (S)-2-succinylamino-6-oxoheptanedioate + CoA. Its pathway is amino-acid biosynthesis; L-lysine biosynthesis via DAP pathway; LL-2,6-diaminopimelate from (S)-tetrahydrodipicolinate (succinylase route): step 1/3. In Bordetella parapertussis (strain 12822 / ATCC BAA-587 / NCTC 13253), this protein is 2,3,4,5-tetrahydropyridine-2,6-dicarboxylate N-succinyltransferase.